A 562-amino-acid chain; its full sequence is Membrane protein insertase YidC (562 aa).

The helical transmembrane segment at 1 to 21 (MDIKRTILIVALAIVTYVGVL) threads the bilayer. The interval 42–74 (TAPGIPDTAAGNNGSASADVPSATGNTTSAAPL) is disordered. Transmembrane regions (helical) follow at residues 343 to 363 (LELTVDYGFLWFIAQPIFWLL), 369 to 389 (ILGNWGWSIIVLTMLIKGLFF), 439 to 459 (LGGCLPILVQMPVFLSLYWVL), 470 to 490 (WILWITDLSIKDPFFILPIIM), and 517 to 537 (PIIFTFFFLWFPAGLVLYWVV).

Belongs to the OXA1/ALB3/YidC family. Type 1 subfamily. In terms of assembly, interacts with the Sec translocase complex via SecD. Specifically interacts with transmembrane segments of nascent integral membrane proteins during membrane integration.

The protein resides in the cell inner membrane. Functionally, required for the insertion and/or proper folding and/or complex formation of integral membrane proteins into the membrane. Involved in integration of membrane proteins that insert both dependently and independently of the Sec translocase complex, as well as at least some lipoproteins. Aids folding of multispanning membrane proteins. This Pseudomonas syringae pv. tomato (strain ATCC BAA-871 / DC3000) protein is Membrane protein insertase YidC.